Here is a 405-residue protein sequence, read N- to C-terminus: Pre-mRNA-splicing factor cwc-24 (405 aa).

2 disordered regions span residues 1 to 114 (MADT…NTIY) and 162 to 184 (TKKKVGGEDDAVQNSEREPDGTY). Positions 15–29 (EPTTATPTAPIAPVA) are enriched in low complexity. Basic residues predominate over residues 31–46 (FKKRGAKGKANLRKRP). Over residues 56–70 (SDDDSSDFESSEDEA) the composition is skewed to acidic residues. Positions 74 to 83 (RIKRRKKNHH) are enriched in basic residues. Residues 221 to 249 (DMAPDVCKDYKQTGFCGFGDNCKFLHARE) form a C3H1-type zinc finger. Residues 310-349 (CIICRGPYSNSPVVTRCGHYFCEACALKRYRKDPSCAACG) form an RING-type zinc finger. A compositionally biased stretch (basic and acidic residues) spans 370-386 (KARAERLRREARERGEE). Residues 370–405 (KARAERLRREARERGEEVSEEEDEGEDEGEGAEGSD) are disordered. The segment covering 387–405 (VSEEEDEGEDEGEGAEGSD) has biased composition (acidic residues).

The protein belongs to the CWC24 family. In terms of assembly, associated with the spliceosome.

It is found in the nucleus. In terms of biological role, involved in pre-mRNA splicing. The chain is Pre-mRNA-splicing factor cwc-24 (cwc-24) from Neurospora crassa (strain ATCC 24698 / 74-OR23-1A / CBS 708.71 / DSM 1257 / FGSC 987).